We begin with the raw amino-acid sequence, 805 residues long: Leucine--tRNA ligase (805 aa).

Positions 41–52 (PYPSGAGLHVGH) match the 'HIGH' region motif. The 'KMSKS' region signature appears at 577–581 (KMSKS). K580 serves as a coordination point for ATP.

This sequence belongs to the class-I aminoacyl-tRNA synthetase family.

It is found in the cytoplasm. It carries out the reaction tRNA(Leu) + L-leucine + ATP = L-leucyl-tRNA(Leu) + AMP + diphosphate. The protein is Leucine--tRNA ligase of Staphylococcus aureus (strain JH1).